A 172-amino-acid polypeptide reads, in one-letter code: Transcriptional repressor NrdR (172 aa).

Residues 3 to 34 (CPFCGEADTKVIDSRLVAEGDQVRRRRECLSC) fold into a zinc finger. Positions 49–139 (PRVVKQDGTR…VYRSFQDINE (91 aa)) constitute an ATP-cone domain.

The protein belongs to the NrdR family. The cofactor is Zn(2+).

In terms of biological role, negatively regulates transcription of bacterial ribonucleotide reductase nrd genes and operons by binding to NrdR-boxes. This chain is Transcriptional repressor NrdR, found in Marinobacter nauticus (strain ATCC 700491 / DSM 11845 / VT8) (Marinobacter aquaeolei).